The primary structure comprises 337 residues: Glycerol-3-phosphate dehydrogenase [NAD(P)+] (337 aa).

Trp12 and Lys107 together coordinate NADPH. Positions 107, 138, and 140 each coordinate sn-glycerol 3-phosphate. Ala142 contributes to the NADPH binding site. Residues Lys193, Asp246, Ser256, Arg257, and Asn258 each contribute to the sn-glycerol 3-phosphate site. The active-site Proton acceptor is Lys193. Arg257 lines the NADPH pocket. NADPH-binding residues include Val282 and Glu284.

Belongs to the NAD-dependent glycerol-3-phosphate dehydrogenase family.

It localises to the cytoplasm. The enzyme catalyses sn-glycerol 3-phosphate + NAD(+) = dihydroxyacetone phosphate + NADH + H(+). It catalyses the reaction sn-glycerol 3-phosphate + NADP(+) = dihydroxyacetone phosphate + NADPH + H(+). Its pathway is membrane lipid metabolism; glycerophospholipid metabolism. Catalyzes the reduction of the glycolytic intermediate dihydroxyacetone phosphate (DHAP) to sn-glycerol 3-phosphate (G3P), the key precursor for phospholipid synthesis. The chain is Glycerol-3-phosphate dehydrogenase [NAD(P)+] from Koribacter versatilis (strain Ellin345).